We begin with the raw amino-acid sequence, 300 residues long: MYNEGVTSPSQLARKKNATDKWHGSSIRKILENPHYTGTLQQCREYRPSVTSKRRRSVNLENQIIIEKSHEPIIPLEDFLIVQEILITRKRRRPQAEVHLFTNTAVCKDCRRSMHFKKNRKGYVCGSYNKHGLKACSDHYVSEIDLTDKVITNLNKIYLKFSKENYFKELSEKALKYKEKIESKIIEINEKLNDKKRDKSNLVISLANGVISKEDYQLAINITNEDISNFETTLHQLSKDLEFQKIEKEIIDFKKSLDKFMKEGTLTPEMLHLLVDEIEVHANGTIEINYRFREPTVPSA.

The segment covering 1 to 11 (MYNEGVTSPSQ) has biased composition (polar residues). The tract at residues 1 to 20 (MYNEGVTSPSQLARKKNATD) is disordered. The segment at residues 1–92 (MYNEGVTSPS…QEILITRKRR (92 aa)) is a DNA-binding region (recombinase). Residues 162-249 (SKENYFKELS…DLEFQKIEKE (88 aa)) are a coiled coil.

This is an uncharacterized protein from Bacillus subtilis (strain 168).